The primary structure comprises 476 residues: mRNA-capping enzyme subunit beta (476 aa).

The disordered stretch occupies residues 1–133 (MNVGSILNDE…KLKSTNKPRR (133 aa)). Basic and acidic residues-rich tracts occupy residues 51–67 (LKTK…EHSN) and 105–114 (HPIEQDKSEK). Positions 123-132 (SKLKSTNKPR) are enriched in basic residues.

This sequence belongs to the fungal TPase family. In terms of assembly, heterodimer. The mRNA-capping enzyme is composed of two separate chains alpha and beta, respectively a mRNA guanylyltransferase and an mRNA 5'-triphosphate monophosphatase. The cofactor is Mg(2+).

Its subcellular location is the nucleus. The enzyme catalyses a 5'-end triphospho-ribonucleoside in mRNA + H2O = a 5'-end diphospho-ribonucleoside in mRNA + phosphate + H(+). In terms of biological role, first step of mRNA capping. Converts the 5'-triphosphate end of a nascent mRNA chain into a diphosphate end. This Debaryomyces hansenii (strain ATCC 36239 / CBS 767 / BCRC 21394 / JCM 1990 / NBRC 0083 / IGC 2968) (Yeast) protein is mRNA-capping enzyme subunit beta (CET1).